Here is a 137-residue protein sequence, read N- to C-terminus: MAALSRALGPLRTPAPPLWIGLFLVATGSQQSLAQPLPGNTTEATPRSLRASGSLCGPHAKAPYLCEATHEPAAARIRAQVPDTRWSRVGGQRFYSRVLSPLHRGPSGHTEASAQRSHMGKLKEPQPQDHKPGLGAS.

The first 34 residues, Met1 to Ala34, serve as a signal peptide directing secretion. A compositionally biased stretch (polar residues) spans Leu33–Thr45. Disordered stretches follow at residues Leu33–Ser54 and Val98–Ser137. Residue Asn40 is glycosylated (N-linked (GlcNAc...) asparagine). Residues Lys121–Ser137 are compositionally biased toward basic and acidic residues.

It localises to the secreted. This is an uncharacterized protein from Homo sapiens (Human).